The sequence spans 386 residues: Beta-citrylglutamate synthase B (386 aa).

One can recognise an ATP-grasp domain in the interval 119–304 (FQELAGHGVP…VAGIIADYAA (186 aa)). Residues Lys-158, 193-203 (QKYVKESHGRD), and Arg-219 each bind ATP. Mg(2+) contacts are provided by Asp-264, Glu-277, and Asn-279. Mn(2+)-binding residues include Asp-264, Glu-277, and Asn-279. The interval 325 to 359 (ASETSEPELGPPASTAVDNMSASSSSVDSDPESTE) is disordered. Positions 338 to 352 (STAVDNMSASSSSVD) are enriched in low complexity.

It belongs to the RimK family. It depends on Mg(2+) as a cofactor. Mn(2+) serves as cofactor.

Its subcellular location is the cytoplasm. It catalyses the reaction citrate + L-glutamate + ATP = beta-citrylglutamate + ADP + phosphate + H(+). The enzyme catalyses N-acetyl-L-aspartate + L-glutamate + ATP = N-acetyl-L-aspartyl-L-glutamate + ADP + phosphate + H(+). Functionally, catalyzes the synthesis of beta-citryl-L-glutamate and N-acetyl-L-aspartyl-L-glutamate. Beta-citryl-L-glutamate is synthesized more efficiently than N-acetyl-L-aspartyl-L-glutamate. This chain is Beta-citrylglutamate synthase B (RIMKLB), found in Homo sapiens (Human).